A 428-amino-acid chain; its full sequence is Adenylosuccinate synthetase (428 aa).

GTP is bound by residues 12–18 (GDEGKGK) and 40–42 (GHT). D13 functions as the Proton acceptor in the catalytic mechanism. Mg(2+) is bound by residues D13 and G40. IMP-binding positions include 13 to 16 (DEGK), 38 to 41 (NAGH), T130, R144, Q224, T239, and R303. The Proton donor role is filled by H41. Residue 299 to 305 (VTTGRSR) coordinates substrate. GTP-binding positions include R305, 331–333 (KID), and 413–415 (GVG).

It belongs to the adenylosuccinate synthetase family. In terms of assembly, homodimer. Requires Mg(2+) as cofactor.

The protein localises to the cytoplasm. It catalyses the reaction IMP + L-aspartate + GTP = N(6)-(1,2-dicarboxyethyl)-AMP + GDP + phosphate + 2 H(+). It functions in the pathway purine metabolism; AMP biosynthesis via de novo pathway; AMP from IMP: step 1/2. Its function is as follows. Plays an important role in the de novo pathway of purine nucleotide biosynthesis. Catalyzes the first committed step in the biosynthesis of AMP from IMP. This chain is Adenylosuccinate synthetase, found in Clostridium perfringens (strain 13 / Type A).